Reading from the N-terminus, the 580-residue chain is Nucleolar protein 58 (580 aa).

Positions 285–410 (IAPNLTALVG…LERKLAAMEG (126 aa)) constitute a Nop domain. Positions 444–580 (DAVTGDEPAS…KKKKKKKGEE (137 aa)) are disordered. A compositionally biased stretch (acidic residues) spans 465 to 487 (EVQDEEMADAADSDEESDSSDEE). Composition is skewed to basic and acidic residues over residues 495 to 505 (SKDSELEKLAE) and 547 to 562 (KKSA…RTDD). The span at 570–580 (KKKKKKKKGEE) shows a compositional bias: basic residues.

It belongs to the NOP5/NOP56 family.

The protein resides in the nucleus. It is found in the nucleolus. In terms of biological role, required for pre-18S rRNA processing. May bind microtubules. This is Nucleolar protein 58 (nop58) from Aspergillus niger (strain ATCC MYA-4892 / CBS 513.88 / FGSC A1513).